Reading from the N-terminus, the 41-residue chain is Large ribosomal subunit protein bL36 (41 aa).

The protein belongs to the bacterial ribosomal protein bL36 family.

In Rhizobium rhizogenes (strain K84 / ATCC BAA-868) (Agrobacterium radiobacter), this protein is Large ribosomal subunit protein bL36.